Here is a 113-residue protein sequence, read N- to C-terminus: UPF0482 protein YnfB (113 aa).

The first 28 residues, 1–28 (MNILSGKLPFLLGAVFAGSVVLATSVQA), serve as a signal peptide directing secretion.

This sequence belongs to the UPF0482 family.

This is UPF0482 protein YnfB from Escherichia fergusonii (strain ATCC 35469 / DSM 13698 / CCUG 18766 / IAM 14443 / JCM 21226 / LMG 7866 / NBRC 102419 / NCTC 12128 / CDC 0568-73).